Reading from the N-terminus, the 874-residue chain is Collagen alpha-2(I) chain (874 aa).

Positions 1 to 874 (SGGFDFSFLP…FGYEGDFYRA (874 aa)) are disordered. Residues P10 and P13 each carry the 4-hydroxyproline modification. K16 carries the post-translational modification Allysine. Residues 27-66 (LMGPRGPPGASGAPGPQGFQGPAGEPGEPGQTGPAGARGP) are compositionally biased toward low complexity. 2 positions are modified to 4-hydroxyproline: P34 and P40. K93 bears the 5-hydroxylysine; alternate mark. O-linked (Gal...) hydroxylysine; alternate glycosylation occurs at K93. Low complexity-rich tracts occupy residues 110-143 (ARGRVGAPGPAGARGSDGSVGPVGPAGPIGSAGP), 188-209 (PGANGLTGAKGAAGLPGVAGAP), and 218-236 (PGPVGARGLVGEPGPAGSK). Residues 237–246 (GESGGKGEPG) are compositionally biased toward gly residues. Over residues 247-257 (SAGPQGPPGSS) the composition is skewed to low complexity. 4-hydroxyproline occurs at positions 317 and 320. Composition is skewed to low complexity over residues 346–365 (LPGIDGRPGPIGPAGARGEA), 434–451 (PGESGAVGPSGAIGSRGP), and 463–473 (EPGVVGAPGTA). Positions 474 to 483 (GPAGSGGLPG) are enriched in gly residues. Low complexity-rich tracts occupy residues 491-538 (RGEV…PRGS) and 545-565 (VGPAGPNGFAGPAGAAGQPGA). Residues 566–575 (KGERGTKGPK) are compositionally biased toward basic and acidic residues. Residues 583–593 (PTGPVGSAGPA) are compositionally biased toward low complexity. Residues 603 to 612 (GSRGDGGPPG) show a composition bias toward gly residues. Over residues 614-623 (TGFPGAAGRT) the composition is skewed to low complexity. The segment covering 648–662 (GPVGRGETGAGGPPG) has biased composition (gly residues). Low complexity-rich tracts occupy residues 663 to 697 (FTGEKGPSGEPGTAGPPGTAGPQGLLGAPGILGLP) and 705 to 724 (LPGVAGAVGEPGPLGIAGPP). Positions 725 to 744 (GARGDGNPGSDGPPGRGAAG) are enriched in gly residues. 2 stretches are compositionally biased toward low complexity: residues 745–755 (APGPHGTVGPA) and 763–778 (EPGPVGSVGPVGALGP).

This sequence belongs to the fibrillar collagen family. As to quaternary structure, trimers of one alpha 2(I) and two alpha 1(I) chains. Interacts (via C-terminus) with TMEM131 (via PapD-L domain); the interaction is direct and is involved in assembly and TRAPPIII ER-to-Golgi transport complex-dependent secretion of collagen. Prolines at the third position of the tripeptide repeating unit (G-X-Y) are hydroxylated in some or all of the chains. In terms of tissue distribution, expressed in bones.

It is found in the secreted. It localises to the extracellular space. The protein resides in the extracellular matrix. Type I collagen is a member of group I collagen (fibrillar forming collagen). In Megalonyx jeffersonii (Jefferson's ground sloth), this protein is Collagen alpha-2(I) chain.